We begin with the raw amino-acid sequence, 88 residues long: Small ribosomal subunit protein uS15 (88 aa).

This sequence belongs to the universal ribosomal protein uS15 family. As to quaternary structure, part of the 30S ribosomal subunit. Forms a bridge to the 50S subunit in the 70S ribosome, contacting the 23S rRNA.

Functionally, one of the primary rRNA binding proteins, it binds directly to 16S rRNA where it helps nucleate assembly of the platform of the 30S subunit by binding and bridging several RNA helices of the 16S rRNA. In terms of biological role, forms an intersubunit bridge (bridge B4) with the 23S rRNA of the 50S subunit in the ribosome. This Mycoplasmopsis pulmonis (strain UAB CTIP) (Mycoplasma pulmonis) protein is Small ribosomal subunit protein uS15.